Reading from the N-terminus, the 404-residue chain is Cysteine desulfurase IscS (404 aa).

Pyridoxal 5'-phosphate contacts are provided by residues 75–76 (AT), Asn155, Gln183, and 203–205 (SAH). An N6-(pyridoxal phosphate)lysine modification is found at Lys206. Residue Thr243 participates in pyridoxal 5'-phosphate binding. Catalysis depends on Cys328, which acts as the Cysteine persulfide intermediate. Residue Cys328 participates in [2Fe-2S] cluster binding.

The protein belongs to the class-V pyridoxal-phosphate-dependent aminotransferase family. NifS/IscS subfamily. As to quaternary structure, homodimer. Forms a heterotetramer with IscU, interacts with other sulfur acceptors. It depends on pyridoxal 5'-phosphate as a cofactor.

It is found in the cytoplasm. It carries out the reaction (sulfur carrier)-H + L-cysteine = (sulfur carrier)-SH + L-alanine. Its pathway is cofactor biosynthesis; iron-sulfur cluster biosynthesis. Its function is as follows. Master enzyme that delivers sulfur to a number of partners involved in Fe-S cluster assembly, tRNA modification or cofactor biosynthesis. Catalyzes the removal of elemental sulfur atoms from cysteine to produce alanine. Functions as a sulfur delivery protein for Fe-S cluster synthesis onto IscU, an Fe-S scaffold assembly protein, as well as other S acceptor proteins. The chain is Cysteine desulfurase IscS from Stutzerimonas stutzeri (strain A1501) (Pseudomonas stutzeri).